A 124-amino-acid chain; its full sequence is Photoactive yellow protein (124 aa).

Residues 22–85 (AESLPFGAVL…GEFLKFNRTG (64 aa)) enclose the PAS domain. Cysteine 68 carries the post-translational modification S-(4-hydroxycinnamyl)cysteine.

Belongs to the photoactive yellow protein family. Post-translationally, the 4-hydroxycinnamic acid (p-coumaric acid) chromophore is covalently bound via a thioester linkage.

Functionally, this photoactive protein is a photoreceptor with kinetics similar to that of rhodopsin. This is Photoactive yellow protein (pyp) from Rhodobacter capsulatus (strain ATCC BAA-309 / NBRC 16581 / SB1003).